The sequence spans 262 residues: Granzyme A (262 aa).

Residues 1–26 form the signal peptide; sequence MRNSYRFLASSLSVVVSLLLIPEDVC. Positions 27–28 are cleaved as a propeptide — activation peptide; the sequence is EK. Residues 29–259 enclose the Peptidase S1 domain; sequence IIGGNEVTPH…HLNWIIMTIK (231 aa). A disulfide bridge links cysteine 54 with cysteine 70. Catalysis depends on charge relay system residues histidine 69 and aspartate 114. 3 disulfide bridges follow: cysteine 148/cysteine 218, cysteine 179/cysteine 197, and cysteine 208/cysteine 234. N-linked (GlcNAc...) asparagine glycosylation is present at asparagine 170. Residue serine 212 is the Charge relay system of the active site.

Belongs to the peptidase S1 family. Granzyme subfamily. Homodimer; disulfide-linked. Interacts with APEX1.

It localises to the secreted. The protein resides in the cytoplasmic granule. It carries out the reaction Hydrolysis of proteins, including fibronectin, type IV collagen and nucleolin. Preferential cleavage: -Arg-|-Xaa-, -Lys-|-Xaa- &gt;&gt; -Phe-|-Xaa- in small molecule substrates.. Abundant protease in the cytosolic granules of cytotoxic T-cells and NK-cells which activates caspase-independent pyroptosis when delivered into the target cell through the immunological synapse. It cleaves after Lys or Arg. Once delivered into the target cell, acts by catalyzing cleavage of gasdermin-B (GSDMB), releasing the pore-forming moiety of GSDMB, thereby triggering pyroptosis and target cell death. Cleaves APEX1 after 'Lys-31' and destroys its oxidative repair activity. Cleaves the nucleosome assembly protein SET after 'Lys-189', which disrupts its nucleosome assembly activity and allows the SET complex to translocate into the nucleus to nick and degrade the DNA. In Homo sapiens (Human), this protein is Granzyme A.